The chain runs to 107 residues: Phosphoribosyl-ATP pyrophosphatase (107 aa).

Belongs to the PRA-PH family.

It is found in the cytoplasm. The catalysed reaction is 1-(5-phospho-beta-D-ribosyl)-ATP + H2O = 1-(5-phospho-beta-D-ribosyl)-5'-AMP + diphosphate + H(+). Its pathway is amino-acid biosynthesis; L-histidine biosynthesis; L-histidine from 5-phospho-alpha-D-ribose 1-diphosphate: step 2/9. The chain is Phosphoribosyl-ATP pyrophosphatase (hisE) from Agrobacterium fabrum (strain C58 / ATCC 33970) (Agrobacterium tumefaciens (strain C58)).